The primary structure comprises 584 residues: Endoribonuclease YBEY, chloroplastic (584 aa).

The transit peptide at 1–50 (MLSRVCPTLRYNRIWSAHAREMPRATLLLLQPNFFHSSPKTALVNRLDVT) directs the protein to the chloroplast. Zn(2+) is bound by residues histidine 240, histidine 244, and histidine 250.

This sequence belongs to the endoribonuclease YbeY family. Zn(2+) is required as a cofactor.

Its subcellular location is the plastid. It is found in the chloroplast stroma. Its function is as follows. Endoribonuclease required for chloroplast ribosomal RNA (rRNA) processing and essential for normal growth and development. May be involved in maturation of both the 5' and 3' ends of 16S, 23S, and 4.5S rRNAs. Cleaves chloroplast rRNAs, mRNAs and tRNAs in vitro. The chain is Endoribonuclease YBEY, chloroplastic from Arabidopsis thaliana (Mouse-ear cress).